The primary structure comprises 470 residues: MPVDINRLTDGWLELESDPGLFTLLLEDFGVKGVQVEEIYDLQKTIEGPVFGFIFLFRWIEERRARRKIVETTTEMYVKDEEAVNSIFFAHQVVPNSCATHALLSVLLNCSDIDLGTTLSRLKVHTKGMCPDNKGWAIGNTPELACAHNSHAMPQARRRMDRNSGVSTGRFTGEAFHFVSFCPINGHLFELDGLKPFPMDHGPWGEKEDWTDKFRRVMSDRLGISTDRRIAITHKLKMLRTNQTIVSAALEKLLKSKQLESRSQAEIRETVDKIKKEEQESTVKLSSEYSQLLEMHEKDEPAVAMSKELESLVSLNSSSDSVEIIGETEIKKENPPPSPPPAFIGAGTFSPKDLLSLLKNLESEINITEQHLCDENEKRAMFKVDDCRRTHNYDEFICTFLSMLAYQGELGDLVTQHLVTSRKPSLGGVQNSGSRGVVRNYNKKSTTNGSSPKTPSSKRRRGRTKYRKRK.

The UCH catalytic domain maps to 11–241 (GWLELESDPG…ITHKLKMLRT (231 aa)). C98 serves as the catalytic Nucleophile. Catalysis depends on H177, which acts as the Proton donor. Residues 260–280 (ESRSQAEIRETVDKIKKEEQE) adopt a coiled-coil conformation. A ULD domain is found at 392-420 (NYDEFICTFLSMLAYQGELGDLVTQHLVT). The positively charged C-terminal tail required for binding nucleosomes stretch occupies residues 422–470 (RKPSLGGVQNSGSRGVVRNYNKKSTTNGSSPKTPSSKRRRGRTKYRKRK). The segment covering 423–434 (KPSLGGVQNSGS) has biased composition (polar residues). A disordered region spans residues 423–470 (KPSLGGVQNSGSRGVVRNYNKKSTTNGSSPKTPSSKRRRGRTKYRKRK). The span at 456–470 (SSKRRRGRTKYRKRK) shows a compositional bias: basic residues.

The protein belongs to the peptidase C12 family. BAP1 subfamily. As to quaternary structure, catalytic component of the polycomb repressive deubiquitinase (PR-DUB) complex, at least composed of caly/calypso, Asx and sba (MBD5/6 homolog). The PR-DUB complex associates with nucleosomes to mediate deubiquitination of histone H2AK118ub1 substrates; the association requires the positively charged C-terminal tail of caly, probably due to direct binding of DNA. Interacts (via ULD domain) with Asx (via DEUBAD domain); the interaction produces a stable heterodimer with a composite binding site for ubiquitin. Homodimerizes (via coiled-coil hinge-region between the UCH and ULD domains) to mediate assembly of 2 copies of the caly-Asx heterodimer into a bisymmetric tetramer; dimerization enhances PR-DUB association with nucleosomes.

Its subcellular location is the nucleus. The catalysed reaction is Thiol-dependent hydrolysis of ester, thioester, amide, peptide and isopeptide bonds formed by the C-terminal Gly of ubiquitin (a 76-residue protein attached to proteins as an intracellular targeting signal).. Catalytic component of the polycomb repressive deubiquitinase (PR-DUB) complex, a complex that specifically mediates deubiquitination of histone H2A monoubiquitinated at 'Lys-119' (H2AK118ub1). Mediates bisymmetric organization of the PR-DUB complex and is involved in association with nucleosomes to mediate deubiquitination. Does not deubiquitinate monoubiquitinated histone H2B. Required to maintain the transcriptionally repressive state of homeotic genes throughout development. The PR-DUB complex has weak or no activity toward 'Lys-48'- and 'Lys-63'-linked polyubiquitin chains. Polycomb group (PcG) protein. The polypeptide is Ubiquitin carboxyl-terminal hydrolase calypso (Culex quinquefasciatus (Southern house mosquito)).